The sequence spans 942 residues: Isoleucine--tRNA ligase (942 aa).

The 'HIGH' region signature appears at 58-68 (PYANGDIHIGH). L-isoleucyl-5'-AMP is bound at residue Glu-566. A 'KMSKS' region motif is present at residues 607-611 (KMSKS). Lys-610 serves as a coordination point for ATP. Zn(2+) contacts are provided by Cys-905, Cys-908, Cys-925, and Cys-928.

The protein belongs to the class-I aminoacyl-tRNA synthetase family. IleS type 1 subfamily. Monomer. The cofactor is Zn(2+).

Its subcellular location is the cytoplasm. The catalysed reaction is tRNA(Ile) + L-isoleucine + ATP = L-isoleucyl-tRNA(Ile) + AMP + diphosphate. Catalyzes the attachment of isoleucine to tRNA(Ile). As IleRS can inadvertently accommodate and process structurally similar amino acids such as valine, to avoid such errors it has two additional distinct tRNA(Ile)-dependent editing activities. One activity is designated as 'pretransfer' editing and involves the hydrolysis of activated Val-AMP. The other activity is designated 'posttransfer' editing and involves deacylation of mischarged Val-tRNA(Ile). This chain is Isoleucine--tRNA ligase, found in Pseudoalteromonas atlantica (strain T6c / ATCC BAA-1087).